Consider the following 511-residue polypeptide: Phospho-2-dehydro-3-deoxyheptonate aldolase 2, chloroplastic (511 aa).

This sequence belongs to the class-II DAHP synthase family. As to expression, leaves, stems, tuber and roots.

The protein resides in the plastid. The protein localises to the chloroplast. The catalysed reaction is D-erythrose 4-phosphate + phosphoenolpyruvate + H2O = 7-phospho-2-dehydro-3-deoxy-D-arabino-heptonate + phosphate. Its pathway is metabolic intermediate biosynthesis; chorismate biosynthesis; chorismate from D-erythrose 4-phosphate and phosphoenolpyruvate: step 1/7. This Solanum tuberosum (Potato) protein is Phospho-2-dehydro-3-deoxyheptonate aldolase 2, chloroplastic (SHKB).